The primary structure comprises 206 residues: Peptidyl-tRNA hydrolase (206 aa).

Tyrosine 14 contacts tRNA. The active-site Proton acceptor is the histidine 19. TRNA is bound by residues phenylalanine 64 and asparagine 66. Residues 185–206 are disordered; it reads VNGEAPKKSKDQAKEPANEQPR. Over residues 189-206 the composition is skewed to basic and acidic residues; sequence APKKSKDQAKEPANEQPR.

This sequence belongs to the PTH family. In terms of assembly, monomer.

The protein localises to the cytoplasm. The catalysed reaction is an N-acyl-L-alpha-aminoacyl-tRNA + H2O = an N-acyl-L-amino acid + a tRNA + H(+). In terms of biological role, hydrolyzes ribosome-free peptidyl-tRNAs (with 1 or more amino acids incorporated), which drop off the ribosome during protein synthesis, or as a result of ribosome stalling. Functionally, catalyzes the release of premature peptidyl moieties from peptidyl-tRNA molecules trapped in stalled 50S ribosomal subunits, and thus maintains levels of free tRNAs and 50S ribosomes. This chain is Peptidyl-tRNA hydrolase, found in Herpetosiphon aurantiacus (strain ATCC 23779 / DSM 785 / 114-95).